Here is a 525-residue protein sequence, read N- to C-terminus: Acetyl-CoA hydrolase (525 aa).

Residue 280–284 participates in CoA binding; the sequence is GIGNI. Glu-305 acts as the 5-glutamyl coenzyme A thioester intermediate in catalysis. Asn-395 and Gly-399 together coordinate CoA.

This sequence belongs to the acetyl-CoA hydrolase/transferase family.

The protein localises to the cytoplasm. The enzyme catalyses acetyl-CoA + H2O = acetate + CoA + H(+). Its function is as follows. Required for utilization of acetate. This Neurospora crassa (strain ATCC 24698 / 74-OR23-1A / CBS 708.71 / DSM 1257 / FGSC 987) protein is Acetyl-CoA hydrolase (acu-8).